The primary structure comprises 836 residues: Envelope glycoprotein gp160 (836 aa).

The N-terminal stretch at 1 to 21 (MGMQSGWPFFCLLISLTIGSD) is a signal peptide. Residues 22–656 (PHWVTVYYGV…ITKWLWYIKI (635 aa)) are Extracellular-facing. C43 and C63 are joined by a disulfide. N77, N121, N130, N134, N146, N150, N180, N189, N224, N228, N233, N254, N276, N282, N288, N318, N328, N340, and N341 each carry an N-linked (GlcNAc...) asparagine; by host glycan. 5 cysteine pairs are disulfide-bonded: C108/C197, C115/C188, C120/C147, C210/C239, and C220/C231. The V1 stretch occupies residues 120 to 146 (CNNSNGNSAGNSTTNRTEDLEDRQMKN). Residues 147–188 (CSFNITTEIRDRKKQVYSLFYVEDVVPIKDGTDNNTYRLINC) are V2. A V3 region spans residues 283–316 (CTRPGNNTGGQVQIGPAMTFYNIEKIVGDVRQAY). A disulfide bond links C283 and C317. Positions 349-359 (KNGGDLEVTHL) are CD4-binding loop. 2 cysteine pairs are disulfide-bonded: C363-C418 and C370-C391. Positions 370–391 (CNTSRLFNESENKTNKTIILPC) are V4. N-linked (GlcNAc...) asparagine; by host glycosylation is found at N371, N377, N381, N384, N415, and N435. The segment at 434-441 (GNKTVYPS) is V5. The tract at residues 482 to 503 (AAFGLGALFLGFLGAAGSTMGA) is fusion peptide. The tract at residues 545–563 (KQLRAKVLAIERYLRDQQI) is immunosuppression. C569 and C575 are oxidised to a cystine. N582, N588, N597, and N609 each carry an N-linked (GlcNAc...) asparagine; by host glycan. The stretch at 605–639 (RKVRNYSGVIFDLIEQAQEQQNTNEKALLELDQWA) forms a coiled coil. Positions 634-655 (ELDQWASLWNWFDITKWLWYIK) are MPER; binding to GalCer. The helical transmembrane segment at 657 to 677 (AIMVVAGIIGIRIISAIITII) threads the bilayer. The Cytoplasmic segment spans residues 678–836 (ARVRQGYSPL…IRQGLERALL (159 aa)). A YXXL motif; contains endocytosis signal motif is present at residues 684–687 (YSPL). A disordered region spans residues 696–715 (AARGPDRPEETEEGVGGQDR). The Di-leucine internalization motif motif lies at 835-836 (LL).

The protein belongs to the HIV-1 env protein family. The mature envelope protein (Env) consists of a homotrimer of non-covalently associated gp120-gp41 heterodimers. The resulting complex protrudes from the virus surface as a spike. There seems to be as few as 10 spikes on the average virion. Interacts with host CD4, CCR5 and CXCR4. Gp120 also interacts with the C-type lectins CD209/DC-SIGN and CLEC4M/DC-SIGNR (collectively referred to as DC-SIGN(R)). Gp120 and gp41 interact with GalCer. Gp120 interacts with host ITGA4/ITGB7 complex; on CD4+ T-cells, this interaction results in rapid activation of integrin ITGAL/LFA-1, which facilitates efficient cell-to-cell spreading of HIV-1. Gp120 interacts with cell-associated heparan sulfate; this interaction increases virus infectivity on permissive cells and may be involved in infection of CD4- cells. As to quaternary structure, the mature envelope protein (Env) consists of a homotrimer of non-covalently associated gp120-gp41 heterodimers. The resulting complex protrudes from the virus surface as a spike. There seems to be as few as 10 spikes on the average virion. Highly glycosylated by host. The high number of glycan on the protein is reffered to as 'glycan shield' because it contributes to hide protein sequence from adaptive immune system. Post-translationally, palmitoylation of the transmembrane protein and of Env polyprotein (prior to its proteolytic cleavage) is essential for their association with host cell membrane lipid rafts. Palmitoylation is therefore required for envelope trafficking to classical lipid rafts, but not for viral replication. In terms of processing, specific enzymatic cleavages in vivo yield mature proteins. Envelope glycoproteins are synthesized as an inactive precursor that is heavily N-glycosylated and processed likely by host cell furin in the Golgi to yield the mature SU and TM proteins. The cleavage site between SU and TM requires the minimal sequence [KR]-X-[KR]-R. About 2 of the 9 disulfide bonds of gp41 are reduced by P4HB/PDI, following binding to CD4 receptor.

The protein resides in the virion membrane. It is found in the host cell membrane. Its subcellular location is the host endosome membrane. In terms of biological role, oligomerizes in the host endoplasmic reticulum into predominantly trimers. In a second time, gp160 transits in the host Golgi, where glycosylation is completed. The precursor is then proteolytically cleaved in the trans-Golgi and thereby activated by cellular furin or furin-like proteases to produce gp120 and gp41. Its function is as follows. Attaches the virus to the host lymphoid cell by binding to the primary receptor CD4. This interaction induces a structural rearrangement creating a high affinity binding site for a chemokine coreceptor like CXCR4 and/or CCR5. Acts as a ligand for CD209/DC-SIGN and CLEC4M/DC-SIGNR, which are respectively found on dendritic cells (DCs), and on endothelial cells of liver sinusoids and lymph node sinuses. These interactions allow capture of viral particles at mucosal surfaces by these cells and subsequent transmission to permissive cells. HIV subverts the migration properties of dendritic cells to gain access to CD4+ T-cells in lymph nodes. Virus transmission to permissive T-cells occurs either in trans (without DCs infection, through viral capture and transmission), or in cis (following DCs productive infection, through the usual CD4-gp120 interaction), thereby inducing a robust infection. In trans infection, bound virions remain infectious over days and it is proposed that they are not degraded, but protected in non-lysosomal acidic organelles within the DCs close to the cell membrane thus contributing to the viral infectious potential during DCs' migration from the periphery to the lymphoid tissues. On arrival at lymphoid tissues, intact virions recycle back to DCs' cell surface allowing virus transmission to CD4+ T-cells. Acts as a class I viral fusion protein. Under the current model, the protein has at least 3 conformational states: pre-fusion native state, pre-hairpin intermediate state, and post-fusion hairpin state. During fusion of viral and target intracellular membranes, the coiled coil regions (heptad repeats) assume a trimer-of-hairpins structure, positioning the fusion peptide in close proximity to the C-terminal region of the ectodomain. The formation of this structure appears to drive apposition and subsequent fusion of viral and target cell membranes. Complete fusion occurs in host cell endosomes and is dynamin-dependent, however some lipid transfer might occur at the plasma membrane. The virus undergoes clathrin-dependent internalization long before endosomal fusion, thus minimizing the surface exposure of conserved viral epitopes during fusion and reducing the efficacy of inhibitors targeting these epitopes. Membranes fusion leads to delivery of the nucleocapsid into the cytoplasm. The chain is Envelope glycoprotein gp160 from Human immunodeficiency virus type 1 group N (isolate YBF106) (HIV-1).